We begin with the raw amino-acid sequence, 304 residues long: Uricase (304 aa).

N-acetylalanine is present on Ala-2. 2 positions are modified to N6-acetyllysine; alternate: Lys-10 and Lys-23. Lys-10 and Lys-23 each carry N6-succinyllysine; alternate. Residue Lys-23 is the Charge relay system of the active site. 2 positions are modified to N6-acetyllysine: Lys-27 and Lys-36. Ser-39 and Ser-63 each carry phosphoserine. Thr-68 serves as the catalytic Charge relay system. Urate is bound by residues Thr-68 and Asp-69. Lys-118, Lys-122, and Lys-164 each carry N6-acetyllysine. Phe-170 contacts urate. Lys-175 and Lys-185 each carry N6-acetyllysine. Arg-187 contacts urate. Residues Lys-221 and Lys-228 each carry the N6-acetyllysine; alternate modification. N6-succinyllysine; alternate occurs at positions 221 and 228. At Ser-232 the chain carries Phosphoserine. Urate contacts are provided by Val-235, Gln-236, and Asn-262. The Charge relay system role is filled by His-264. The residue at position 278 (Lys-278) is an N6-acetyllysine. A Phosphotyrosine modification is found at Tyr-289. The Microbody targeting signal signature appears at 302–304 (SKL).

Belongs to the uricase family.

It localises to the peroxisome. It catalyses the reaction urate + O2 + H2O = 5-hydroxyisourate + H2O2. It participates in purine metabolism; urate degradation; (S)-allantoin from urate: step 1/3. Catalyzes the oxidation of uric acid to 5-hydroxyisourate, which is further processed to form (S)-allantoin. The polypeptide is Uricase (UOX) (Canis lupus familiaris (Dog)).